The sequence spans 542 residues: Apolipoprotein N-acyltransferase (542 aa).

The next 6 helical transmembrane spans lie at 24–44 (VVAS…GLFA), 54–74 (VWCI…SWML), 85–105 (FVWG…SCLV), 116–136 (ALVW…YGLL), 160–180 (FFGW…CFAV), and 190–210 (GLWL…YEYL). In terms of domain architecture, CN hydrolase spans 220–499 (LRVAIVQPGY…TGVLQVSVPL (280 aa)). Catalysis depends on Glu264, which acts as the Proton acceptor. Lys349 is an active-site residue. Cys404 functions as the Nucleophile in the catalytic mechanism. The helical transmembrane segment at 509-529 (LGDAPLLLIAVCSVIGAIAYF) threads the bilayer.

The protein belongs to the CN hydrolase family. Apolipoprotein N-acyltransferase subfamily.

The protein localises to the cell inner membrane. The catalysed reaction is N-terminal S-1,2-diacyl-sn-glyceryl-L-cysteinyl-[lipoprotein] + a glycerophospholipid = N-acyl-S-1,2-diacyl-sn-glyceryl-L-cysteinyl-[lipoprotein] + a 2-acyl-sn-glycero-3-phospholipid + H(+). The protein operates within protein modification; lipoprotein biosynthesis (N-acyl transfer). In terms of biological role, catalyzes the phospholipid dependent N-acylation of the N-terminal cysteine of apolipoprotein, the last step in lipoprotein maturation. This chain is Apolipoprotein N-acyltransferase, found in Chlamydia trachomatis serovar D (strain ATCC VR-885 / DSM 19411 / UW-3/Cx).